Consider the following 524-residue polypeptide: Cytochrome P450 monooxygenase patH (524 aa).

Over 1-4 (MEPM) the chain is Cytoplasmic. The chain crosses the membrane as a helical span at residues 5–23 (LLLILVAAVVLLFVRWAFV). Over 24–524 (YGHRTSNMPK…KEVFSQFTEG (501 aa)) the chain is Lumenal. Asparagine 191 carries N-linked (GlcNAc...) asparagine glycosylation. Cysteine 442 is a heme binding site. N-linked (GlcNAc...) asparagine glycosylation occurs at asparagine 499.

It belongs to the cytochrome P450 family. The cofactor is heme.

The protein resides in the endoplasmic reticulum membrane. The enzyme catalyses 3-methylphenol + reduced [NADPH--hemoprotein reductase] + O2 = 3-hydroxybenzyl alcohol + oxidized [NADPH--hemoprotein reductase] + H2O + H(+). It participates in mycotoxin biosynthesis; patulin biosynthesis. In terms of biological role, cytochrome P450 monooxygenase; part of the gene cluster that mediates the biosynthesis of patulin, an acetate-derived tetraketide mycotoxin produced by several fungal species that shows antimicrobial properties against several bacteria. PatH catalyzes the conversion of m-cresol into m-hydroxybenzyl alcohol. The pathway begins with the synthesis of 6-methylsalicylic acid by the polyketide synthase (PKS) patK via condensation of acetate and malonate units. The 6-methylsalicylic acid decarboxylase patG then catalyzes the decarboxylation of 6-methylsalicylic acid to yield m-cresol (also known as 3-methylphenol). These first reactions occur in the cytosol. The intermediate m-cresol is then transported into the endoplasmic reticulum where the cytochrome P450 monooxygenase patH converts it to m-hydroxybenzyl alcohol, which is further converted to gentisyl alcohol by the cytochrome P450 monooxygenase patI. The oxidoreductases patJ and patO further convert gentisyl alcohol to isoepoxydon in the vacuole. PatN catalyzes then the transformation of isoepoxydon into phyllostine. The cluster protein patF is responsible for the conversion from phyllostine to neopatulin whereas the alcohol dehydrogenase patD converts neopatulin to E-ascladiol. The steps between isoepoxydon and E-ascladiol occur in the cytosol, and E-ascladiol is probably secreted to the extracellular space by one of the cluster-specific transporters patC or patM. Finally, the secreted patulin synthase patE catalyzes the conversion of E-ascladiol to patulin. This is Cytochrome P450 monooxygenase patH from Aspergillus clavatus (strain ATCC 1007 / CBS 513.65 / DSM 816 / NCTC 3887 / NRRL 1 / QM 1276 / 107).